Here is a 529-residue protein sequence, read N- to C-terminus: T-complex protein 1 subunit delta (529 aa).

It belongs to the TCP-1 chaperonin family. In terms of assembly, heterooligomeric complex of about 850 to 900 kDa that forms two stacked rings, 12 to 16 nm in diameter.

The protein resides in the cytoplasm. Its function is as follows. Molecular chaperone; assists the folding of proteins upon ATP hydrolysis. Known to play a role, in vitro, in the folding of actin and tubulin. The polypeptide is T-complex protein 1 subunit delta (CCT4) (Candida glabrata (strain ATCC 2001 / BCRC 20586 / JCM 3761 / NBRC 0622 / NRRL Y-65 / CBS 138) (Yeast)).